The sequence spans 431 residues: Adenylosuccinate synthetase (431 aa).

GTP contacts are provided by residues 12 to 18 (GDEGKGK) and 40 to 42 (GHT). The Proton acceptor role is filled by D13. Mg(2+) contacts are provided by D13 and G40. IMP-binding positions include 13-16 (DEGK), 38-41 (NAGH), T128, R142, Q223, T238, and R301. Residue H41 is the Proton donor of the active site. 297–303 (TVTGRPR) is a substrate binding site. GTP is bound by residues R303, 329 to 331 (SID), and 411 to 413 (SVG).

It belongs to the adenylosuccinate synthetase family. Homodimer. It depends on Mg(2+) as a cofactor.

The protein resides in the cytoplasm. The catalysed reaction is IMP + L-aspartate + GTP = N(6)-(1,2-dicarboxyethyl)-AMP + GDP + phosphate + 2 H(+). The protein operates within purine metabolism; AMP biosynthesis via de novo pathway; AMP from IMP: step 1/2. In terms of biological role, plays an important role in the de novo pathway of purine nucleotide biosynthesis. Catalyzes the first committed step in the biosynthesis of AMP from IMP. The chain is Adenylosuccinate synthetase from Lacticaseibacillus casei (strain BL23) (Lactobacillus casei).